The chain runs to 288 residues: Phosphatidylserine decarboxylase proenzyme (288 aa).

Residues Asp-92, His-149, and Ser-254 each act as charge relay system; for autoendoproteolytic cleavage activity in the active site. The active-site Schiff-base intermediate with substrate; via pyruvic acid; for decarboxylase activity is Ser-254. Ser-254 carries the pyruvic acid (Ser); by autocatalysis modification.

Belongs to the phosphatidylserine decarboxylase family. PSD-B subfamily. Prokaryotic type I sub-subfamily. In terms of assembly, heterodimer of a large membrane-associated beta subunit and a small pyruvoyl-containing alpha subunit. The cofactor is pyruvate. In terms of processing, is synthesized initially as an inactive proenzyme. Formation of the active enzyme involves a self-maturation process in which the active site pyruvoyl group is generated from an internal serine residue via an autocatalytic post-translational modification. Two non-identical subunits are generated from the proenzyme in this reaction, and the pyruvate is formed at the N-terminus of the alpha chain, which is derived from the carboxyl end of the proenzyme. The autoendoproteolytic cleavage occurs by a canonical serine protease mechanism, in which the side chain hydroxyl group of the serine supplies its oxygen atom to form the C-terminus of the beta chain, while the remainder of the serine residue undergoes an oxidative deamination to produce ammonia and the pyruvoyl prosthetic group on the alpha chain. During this reaction, the Ser that is part of the protease active site of the proenzyme becomes the pyruvoyl prosthetic group, which constitutes an essential element of the active site of the mature decarboxylase.

Its subcellular location is the cell membrane. The enzyme catalyses a 1,2-diacyl-sn-glycero-3-phospho-L-serine + H(+) = a 1,2-diacyl-sn-glycero-3-phosphoethanolamine + CO2. The protein operates within phospholipid metabolism; phosphatidylethanolamine biosynthesis; phosphatidylethanolamine from CDP-diacylglycerol: step 2/2. Its function is as follows. Catalyzes the formation of phosphatidylethanolamine (PtdEtn) from phosphatidylserine (PtdSer). This chain is Phosphatidylserine decarboxylase proenzyme, found in Bordetella petrii (strain ATCC BAA-461 / DSM 12804 / CCUG 43448).